A 654-amino-acid chain; its full sequence is tRNA 5-methylaminomethyl-2-thiouridine biosynthesis bifunctional protein MnmC (654 aa).

Residues methionine 1–glutamine 235 form a tRNA (mnm(5)s(2)U34)-methyltransferase region. Residues valine 261–glycine 654 are FAD-dependent cmnm(5)s(2)U34 oxidoreductase.

The protein in the N-terminal section; belongs to the methyltransferase superfamily. tRNA (mnm(5)s(2)U34)-methyltransferase family. This sequence in the C-terminal section; belongs to the DAO family. FAD serves as cofactor.

Its subcellular location is the cytoplasm. It catalyses the reaction 5-aminomethyl-2-thiouridine(34) in tRNA + S-adenosyl-L-methionine = 5-methylaminomethyl-2-thiouridine(34) in tRNA + S-adenosyl-L-homocysteine + H(+). Its function is as follows. Catalyzes the last two steps in the biosynthesis of 5-methylaminomethyl-2-thiouridine (mnm(5)s(2)U) at the wobble position (U34) in tRNA. Catalyzes the FAD-dependent demodification of cmnm(5)s(2)U34 to nm(5)s(2)U34, followed by the transfer of a methyl group from S-adenosyl-L-methionine to nm(5)s(2)U34, to form mnm(5)s(2)U34. The protein is tRNA 5-methylaminomethyl-2-thiouridine biosynthesis bifunctional protein MnmC of Pseudomonas aeruginosa (strain UCBPP-PA14).